The primary structure comprises 405 residues: Na(+)-translocating NADH-quinone reductase subunit F (405 aa).

The chain crosses the membrane as a helical span at residues 3-23 (IILGIVMFTVIVLALALMILF). The region spanning 32–124 (GDITIKVNDE…DMDIEVPEEV (93 aa)) is the 2Fe-2S ferredoxin-type domain. Residues Cys-67, Cys-73, Cys-76, and Cys-108 each coordinate [2Fe-2S] cluster. An FAD-binding FR-type domain is found at 127-267 (VKKWECTVIS…SGPFGEFFAK (141 aa)).

It belongs to the NqrF family. In terms of assembly, composed of six subunits; NqrA, NqrB, NqrC, NqrD, NqrE and NqrF. Requires [2Fe-2S] cluster as cofactor. FAD is required as a cofactor.

The protein localises to the cell inner membrane. It catalyses the reaction a ubiquinone + n Na(+)(in) + NADH + H(+) = a ubiquinol + n Na(+)(out) + NAD(+). NQR complex catalyzes the reduction of ubiquinone-1 to ubiquinol by two successive reactions, coupled with the transport of Na(+) ions from the cytoplasm to the periplasm. The first step is catalyzed by NqrF, which accepts electrons from NADH and reduces ubiquinone-1 to ubisemiquinone by a one-electron transfer pathway. The polypeptide is Na(+)-translocating NADH-quinone reductase subunit F (Neisseria gonorrhoeae (strain ATCC 700825 / FA 1090)).